Reading from the N-terminus, the 100-residue chain is Large ribosomal subunit protein uL23 (100 aa).

The protein belongs to the universal ribosomal protein uL23 family. As to quaternary structure, part of the 50S ribosomal subunit. Contacts protein L29, and trigger factor when it is bound to the ribosome.

Its function is as follows. One of the early assembly proteins it binds 23S rRNA. One of the proteins that surrounds the polypeptide exit tunnel on the outside of the ribosome. Forms the main docking site for trigger factor binding to the ribosome. The sequence is that of Large ribosomal subunit protein uL23 from Mycobacterium tuberculosis (strain ATCC 25177 / H37Ra).